The chain runs to 90 residues: Small ribosomal subunit protein bS18 (90 aa).

This sequence belongs to the bacterial ribosomal protein bS18 family. As to quaternary structure, part of the 30S ribosomal subunit. Forms a tight heterodimer with protein bS6.

Functionally, binds as a heterodimer with protein bS6 to the central domain of the 16S rRNA, where it helps stabilize the platform of the 30S subunit. This chain is Small ribosomal subunit protein bS18, found in Polynucleobacter asymbioticus (strain DSM 18221 / CIP 109841 / QLW-P1DMWA-1) (Polynucleobacter necessarius subsp. asymbioticus).